The following is a 243-amino-acid chain: Type II restriction enzyme NlaIV (243 aa).

It catalyses the reaction Endonucleolytic cleavage of DNA to give specific double-stranded fragments with terminal 5'-phosphates.. Functionally, a P subtype restriction enzyme that recognizes the double-stranded sequence 5'-GGNNCC-3' and cleaves after N-3. In Neisseria lactamica, this protein is Type II restriction enzyme NlaIV (nlaIVR).